The chain runs to 450 residues: Phosphoglucosamine mutase (450 aa).

The Phosphoserine intermediate role is filled by Ser-102. Mg(2+) contacts are provided by Ser-102, Asp-243, Asp-245, and Asp-247. Residue Ser-102 is modified to Phosphoserine.

Belongs to the phosphohexose mutase family. The cofactor is Mg(2+). Post-translationally, activated by phosphorylation.

The enzyme catalyses alpha-D-glucosamine 1-phosphate = D-glucosamine 6-phosphate. In terms of biological role, catalyzes the conversion of glucosamine-6-phosphate to glucosamine-1-phosphate. This chain is Phosphoglucosamine mutase, found in Rhizobium etli (strain ATCC 51251 / DSM 11541 / JCM 21823 / NBRC 15573 / CFN 42).